The chain runs to 115 residues: Nucleoid-associated protein LBL_0065 (115 aa).

This sequence belongs to the YbaB/EbfC family. As to quaternary structure, homodimer.

The protein localises to the cytoplasm. Its subcellular location is the nucleoid. Functionally, binds to DNA and alters its conformation. May be involved in regulation of gene expression, nucleoid organization and DNA protection. This Leptospira borgpetersenii serovar Hardjo-bovis (strain L550) protein is Nucleoid-associated protein LBL_0065.